Here is a 184-residue protein sequence, read N- to C-terminus: ADP-ribosylation factor-like protein 8c (184 aa).

An intramembrane region (note=Mediates targeting to membranes) is located at residues 1–18 (MGLWDSLLNWLRSLFFKQ). GTP contacts are provided by residues 29–34 (NAGKTS), 48–51 (MIPT), 70–74 (DLGGQ), and 129–132 (NKID).

The protein belongs to the small GTPase superfamily. Arf family. Interacts with tubulin.

The protein localises to the late endosome membrane. It localises to the lysosome membrane. It is found in the cytoplasm. The protein resides in the cytoskeleton. Its subcellular location is the spindle. May play a role in lysosome motility. May play a role in chromosome segregation. In terms of biological role, (Microbial infection) Component of tomato mosaic virus (ToMV) RNA replication complexes. Required for tobamovirus multiplication, especially for efficient negative-strand RNA synthesis and viral RNA capping. The chain is ADP-ribosylation factor-like protein 8c from Arabidopsis thaliana (Mouse-ear cress).